A 90-amino-acid polypeptide reads, in one-letter code: Sec-independent protein translocase protein TatA (90 aa).

The helical transmembrane segment at 1 to 21 (MGGASIWHWIVVGVIVMLLFG) threads the bilayer. The segment at 42-90 (GMADEDQPQAPVANQSPPPVSATEPVRTLPPHQGEPAPAANASVDRKVG) is disordered.

Belongs to the TatA/E family. In terms of assembly, the Tat system comprises two distinct complexes: a TatABC complex, containing multiple copies of TatA, TatB and TatC subunits, and a separate TatA complex, containing only TatA subunits. Substrates initially bind to the TatABC complex, which probably triggers association of the separate TatA complex to form the active translocon.

Its subcellular location is the cell inner membrane. Functionally, part of the twin-arginine translocation (Tat) system that transports large folded proteins containing a characteristic twin-arginine motif in their signal peptide across membranes. TatA could form the protein-conducting channel of the Tat system. The protein is Sec-independent protein translocase protein TatA of Methylobacterium nodulans (strain LMG 21967 / CNCM I-2342 / ORS 2060).